Reading from the N-terminus, the 429-residue chain is Histidine--tRNA ligase (429 aa).

This sequence belongs to the class-II aminoacyl-tRNA synthetase family. In terms of assembly, homodimer.

The protein localises to the cytoplasm. The catalysed reaction is tRNA(His) + L-histidine + ATP = L-histidyl-tRNA(His) + AMP + diphosphate + H(+). This is Histidine--tRNA ligase from Streptococcus pneumoniae (strain P1031).